Here is a 96-residue protein sequence, read N- to C-terminus: Co-chaperonin GroES (96 aa).

Belongs to the GroES chaperonin family. Heptamer of 7 subunits arranged in a ring. Interacts with the chaperonin GroEL.

The protein localises to the cytoplasm. Functionally, together with the chaperonin GroEL, plays an essential role in assisting protein folding. The GroEL-GroES system forms a nano-cage that allows encapsulation of the non-native substrate proteins and provides a physical environment optimized to promote and accelerate protein folding. GroES binds to the apical surface of the GroEL ring, thereby capping the opening of the GroEL channel. The polypeptide is Co-chaperonin GroES (Wolbachia pipientis wMel).